A 272-amino-acid polypeptide reads, in one-letter code: Methylsterol monooxygenase 2-1 (272 aa).

The next 3 helical transmembrane spans lie at 24 to 44 (IGSF…YIFL), 72 to 94 (LLLY…FRFM), and 107 to 127 (VVSA…YWGH). The Fatty acid hydroxylase domain occupies 113–259 (LFYFIIEDFV…FVYMDWIFGT (147 aa)). Residues 127-131 (HRILH) carry the Histidine box-1 motif. A Histidine box-2 motif is present at residues 140 to 144 (HSVHH). Helical transmembrane passes span 162–182 (ILFL…HLIT) and 209–229 (NFLP…AYSA). The short motif at 231–237 (FHDYHHR) is the Histidine box-3 element.

The protein belongs to the sterol desaturase family. The cofactor is Fe cation. Strongly expressed in leaves, flowers, siliques and developing seeds.

It is found in the endoplasmic reticulum membrane. The enzyme catalyses 4,4-dimethyl-5alpha-cholest-7-en-3beta-ol + 6 Fe(II)-[cytochrome b5] + 3 O2 + 5 H(+) = 4alpha-carboxy-4beta-methyl-5alpha-cholest-7-ene-3beta-ol + 6 Fe(III)-[cytochrome b5] + 4 H2O. It carries out the reaction 24-methylidenelophenol + 6 Fe(II)-[cytochrome b5] + 3 O2 + 5 H(+) = 4alpha-carboxy-ergosta-7,24(24(1))-dien-3beta-ol + 6 Fe(III)-[cytochrome b5] + 4 H2O. Functionally, non-heme iron oxygenase involved in sterols biosynthesis by catalyzing the removal of the second methyl group at the C-4 position. 24-ethylidenelophenol and 24-ethyllophenol are the preferred substrates. Together with SMO2-2, required during embryogenesis, probably by maintaining sterols and auxin homeostasis. The protein is Methylsterol monooxygenase 2-1 of Arabidopsis thaliana (Mouse-ear cress).